Here is a 236-residue protein sequence, read N- to C-terminus: Probable metal transport system ATP-binding protein CT_416 (236 aa).

Positions 5–236 (MLLENVSFRY…FCCNTFGRCP (232 aa)) constitute an ABC transporter domain. Position 39-46 (39-46 (GPNGGGKT)) interacts with ATP.

The protein belongs to the ABC transporter superfamily.

It is found in the cell inner membrane. In terms of biological role, part of an ATP-driven transport system CT_415/CT_416/CT_417 for a metal. Probably responsible for energy coupling to the transport system. This chain is Probable metal transport system ATP-binding protein CT_416, found in Chlamydia trachomatis serovar D (strain ATCC VR-885 / DSM 19411 / UW-3/Cx).